We begin with the raw amino-acid sequence, 270 residues long: Protoheme IX farnesyltransferase (270 aa).

7 consecutive transmembrane segments (helical) span residues 13-30 (LALLNGIAAVAGHALVPD), 33-53 (HATLWVALAGVAILAAGGSAL), 95-115 (LLVLAAGGPVPPLLGAVALAW), 129-149 (LALAIGAVSGALPPVIGWTLA), 156-176 (YRIILLAGIFFLWQVPHFWLF), 207-227 (LWLGALAASVLLLPAFGLMAP), and 249-269 (EATLFSCLNAFPPLMALALLL).

It belongs to the UbiA prenyltransferase family. Protoheme IX farnesyltransferase subfamily.

The protein resides in the cell inner membrane. The enzyme catalyses heme b + (2E,6E)-farnesyl diphosphate + H2O = Fe(II)-heme o + diphosphate. It participates in porphyrin-containing compound metabolism; heme O biosynthesis; heme O from protoheme: step 1/1. Its function is as follows. Converts heme B (protoheme IX) to heme O by substitution of the vinyl group on carbon 2 of heme B porphyrin ring with a hydroxyethyl farnesyl side group. This is Protoheme IX farnesyltransferase from Geobacter sulfurreducens (strain ATCC 51573 / DSM 12127 / PCA).